Consider the following 555-residue polypeptide: 6-phosphofructo-2-kinase/fructose-2,6-bisphosphatase 3 (555 aa).

A 6-phosphofructo-2-kinase region spans residues 1 to 245 (MPLELTQSRV…VYYLMNIHVQ (245 aa)). Residue 42–50 (GLPARGKTY) coordinates ATP. Residues Arg-75 and Arg-99 each contribute to the beta-D-fructose 6-phosphate site. Asp-125 is an active-site residue. 2 residues coordinate beta-D-fructose 6-phosphate: Thr-127 and Arg-133. The active site involves Cys-155. 164–169 (NIMEVK) is an ATP binding site. Beta-D-fructose 6-phosphate is bound by residues Lys-169, Arg-190, and Tyr-194. The tract at residues 246 to 555 (PRTIYLCRHG…CHIFSKFSPY (310 aa)) is fructose-2,6-bisphosphatase. Position 253 (Arg-253) interacts with beta-D-fructose 2,6-bisphosphate. The active-site Tele-phosphohistidine intermediate is His-254. Beta-D-fructose 2,6-bisphosphate contacts are provided by Asn-260 and Gly-266. The Proton donor/acceptor role is filled by Glu-323. Residues Tyr-334, Arg-348, Lys-352, Tyr-363, Gln-389, and Arg-393 each contribute to the beta-D-fructose 2,6-bisphosphate site. 345 to 348 (YALR) contributes to the ATP binding site. ATP contacts are provided by residues 389–393 (QAVLR) and Tyr-425. A disordered region spans residues 475 to 504 (KQDAKKGPNPLMRRNSVTPLASPEPTKKPR). Residue Ser-490 is modified to Phosphoserine; by AMPK and PKA. Thr-492 is modified (phosphothreonine). Ser-496 is modified (phosphoserine).

It in the C-terminal section; belongs to the phosphoglycerate mutase family. In terms of assembly, homodimer. Forms a heterodimer with PFKFB2. Post-translationally, phosphorylation by AMPK stimulates activity.

It catalyses the reaction beta-D-fructose 2,6-bisphosphate + H2O = beta-D-fructose 6-phosphate + phosphate. The enzyme catalyses beta-D-fructose 6-phosphate + ATP = beta-D-fructose 2,6-bisphosphate + ADP + H(+). Its function is as follows. Catalyzes both the synthesis and degradation of fructose 2,6-bisphosphate. The chain is 6-phosphofructo-2-kinase/fructose-2,6-bisphosphatase 3 (Pfkfb3) from Rattus norvegicus (Rat).